The primary structure comprises 373 residues: Bifunctional enzyme IspD/IspF (373 aa).

Positions 1-212 (MPDITLILLG…PCIEAPSGKT (212 aa)) are 2-C-methyl-D-erythritol 4-phosphate cytidylyltransferase. Residues 213–373 (LTGFGLDIHP…NLTYYNWKQK (161 aa)) form a 2-C-methyl-D-erythritol 2,4-cyclodiphosphate synthase region. Positions 219 and 221 each coordinate a divalent metal cation. 4-CDP-2-C-methyl-D-erythritol 2-phosphate is bound by residues 219 to 221 (DIH) and 245 to 246 (HS). Position 253 (histidine 253) interacts with a divalent metal cation. 4-CDP-2-C-methyl-D-erythritol 2-phosphate-binding positions include 267 to 269 (DIG), 272 to 276 (YPDTD), 343 to 346 (TTAE), phenylalanine 350, and arginine 353.

The protein in the N-terminal section; belongs to the IspD/TarI cytidylyltransferase family. IspD subfamily. It in the C-terminal section; belongs to the IspF family. A divalent metal cation serves as cofactor.

The catalysed reaction is 2-C-methyl-D-erythritol 4-phosphate + CTP + H(+) = 4-CDP-2-C-methyl-D-erythritol + diphosphate. It catalyses the reaction 4-CDP-2-C-methyl-D-erythritol 2-phosphate = 2-C-methyl-D-erythritol 2,4-cyclic diphosphate + CMP. Its pathway is isoprenoid biosynthesis; isopentenyl diphosphate biosynthesis via DXP pathway; isopentenyl diphosphate from 1-deoxy-D-xylulose 5-phosphate: step 2/6. The protein operates within isoprenoid biosynthesis; isopentenyl diphosphate biosynthesis via DXP pathway; isopentenyl diphosphate from 1-deoxy-D-xylulose 5-phosphate: step 4/6. Bifunctional enzyme that catalyzes the formation of 4-diphosphocytidyl-2-C-methyl-D-erythritol from CTP and 2-C-methyl-D-erythritol 4-phosphate (MEP) (IspD), and catalyzes the conversion of 4-diphosphocytidyl-2-C-methyl-D-erythritol 2-phosphate (CDP-ME2P) to 2-C-methyl-D-erythritol 2,4-cyclodiphosphate (ME-CPP) with a corresponding release of cytidine 5-monophosphate (CMP) (IspF). This Sulfurovum sp. (strain NBC37-1) protein is Bifunctional enzyme IspD/IspF.